The chain runs to 387 residues: Killer cell lectin-like receptor subfamily G member 2 (387 aa).

A disordered region spans residues 1 to 105; the sequence is MEPPQVPAEA…SGEPAPASWA (105 aa). A compositionally biased stretch (basic and acidic residues) spans 15–27; that stretch reads ASEDSPRPERTGW. Phosphoserine is present on serine 143. The segment at 155-174 is disordered; the sequence is QWLPRAPSPGSTWSRGSPLA. Residues 241–261 traverse the membrane as a helical segment; the sequence is WALVVMAVLLAVCTVAVVALA. Residues 278-383 enclose the C-type lectin domain; it reads SQEQCYYLSE…CSSPRPWVCA (106 aa). 2 cysteine pairs are disulfide-bonded: cysteine 299/cysteine 382 and cysteine 361/cysteine 374.

It is found in the membrane. The polypeptide is Killer cell lectin-like receptor subfamily G member 2 (Klrg2) (Mus musculus (Mouse)).